Reading from the N-terminus, the 65-residue chain is Small ribosomal subunit protein eS27 (65 aa).

Positions 20, 23, 39, and 42 each coordinate Zn(2+). The segment at 20 to 42 (CIDCGNEQIVFSHPATKVRCLVC) adopts a C4-type zinc-finger fold.

It belongs to the eukaryotic ribosomal protein eS27 family. Part of the 30S ribosomal subunit. Zn(2+) serves as cofactor.

The sequence is that of Small ribosomal subunit protein eS27 from Thermococcus gammatolerans (strain DSM 15229 / JCM 11827 / EJ3).